A 201-amino-acid chain; its full sequence is Retinol binding protein 4 (201 aa).

Positions 1-18 are cleaved as a signal peptide; sequence MAWVWALVLLAALGSARA. Disulfide bonds link Cys22-Cys178, Cys88-Cys192, and Cys138-Cys147. Gln116 lines the substrate pocket. Arg139 bears the Omega-N-methylarginine mark.

The protein belongs to the calycin superfamily. Lipocalin family. In terms of assembly, interacts with TTR. Interaction with TTR prevents its loss by filtration through the kidney glomeruli. Interacts with STRA6. As to expression, highly expressed in liver. Also expressed in adipose tissue. Expressed by endometrium from days 16-25 and by unattached chorioallantois from days 30-36 during pregnancy.

It localises to the secreted. Its function is as follows. Retinol-binding protein that mediates retinol transport in blood plasma. Delivers retinol from the liver stores to the peripheral tissues. Transfers the bound all-trans retinol to STRA6, that then facilitates retinol transport across the cell membrane. This chain is Retinol binding protein 4, found in Felis catus (Cat).